The primary structure comprises 418 residues: F-box/LRR-repeat protein 14 (418 aa).

Residues Glu-2–Val-48 enclose the F-box domain. The tract at residues Glu-2–Val-48 is required for down-regulation of SNAI1. 5 LRR repeats span residues Gly-144–Leu-163, Arg-170–Ala-191, Gly-203–Arg-225, Gly-229–Ser-250, and Ser-254–Ala-275.

In terms of assembly, part of a SCF (SKP1-cullin-F-box) ubiquitin-protein ligase complex. Interacts with SKP1 and CUL1. Interacts with SNAI1; the interaction requires the phosphorylation of the two serine residues in the substrate destruction motif D-S-G-X(2,3,4)-S.

The protein resides in the cytoplasm. Functionally, substrate-recognition component of some SCF (SKP1-CUL1-F-box protein)-type E3 ubiquitin-protein ligase complexes. The SCF(FBXL14) complex acts by mediating ubiquitination and subsequent degradation of SNAI1. This chain is F-box/LRR-repeat protein 14 (FBXL14), found in Homo sapiens (Human).